Here is a 323-residue protein sequence, read N- to C-terminus: Formimidoylglutamase (323 aa).

Positions 131, 157, 159, 161, 245, and 247 each coordinate Mn(2+).

It belongs to the arginase family. Mn(2+) serves as cofactor.

The enzyme catalyses N-formimidoyl-L-glutamate + H2O = formamide + L-glutamate. It functions in the pathway amino-acid degradation; L-histidine degradation into L-glutamate; L-glutamate from N-formimidoyl-L-glutamate (hydrolase route): step 1/1. Its function is as follows. Catalyzes the conversion of N-formimidoyl-L-glutamate to L-glutamate and formamide. This chain is Formimidoylglutamase, found in Geobacillus kaustophilus (strain HTA426).